The sequence spans 280 residues: Fructose-1,6-bisphosphatase class 1 (280 aa).

The Mg(2+) site is built by Glu64, Asp83, Leu85, and Asp86. Substrate contacts are provided by residues 86–89 (DGSS), Tyr189, and Lys220. Position 226 (Glu226) interacts with Mg(2+).

It belongs to the FBPase class 1 family. Homotetramer. Mg(2+) is required as a cofactor.

It is found in the cytoplasm. The enzyme catalyses beta-D-fructose 1,6-bisphosphate + H2O = beta-D-fructose 6-phosphate + phosphate. The protein operates within carbohydrate biosynthesis; gluconeogenesis. The polypeptide is Fructose-1,6-bisphosphatase class 1 (Campylobacter jejuni subsp. jejuni serotype O:23/36 (strain 81-176)).